A 238-amino-acid polypeptide reads, in one-letter code: Envelope glycoprotein G (238 aa).

The first 24 residues, 1 to 24, serve as a signal peptide directing secretion; the sequence is MSQGAMRAVVPIIPFLLVLVGVSG. The Virion surface segment spans residues 25-189; sequence VPTNVSSTTQ…SFLTASPALD (165 aa). N-linked (GlcNAc...) asparagine; by host glycosylation is found at N28 and N49. Composition is skewed to polar residues over residues 28–42 and 49–68; these read NVSS…TTGR and NMTQ…TTPD. The tract at residues 28-171 is disordered; sequence NVSSTTQPQL…LTSKGRPLVP (144 aa). A compositionally biased stretch (acidic residues) spans 78-88; the sequence is LEEEEEEEGAG. The span at 89 to 100 shows a compositional bias: basic and acidic residues; sequence DGEHLEGGDGTR. The helical transmembrane segment at 190–210 threads the bilayer; the sequence is TLFVVSTVIHTLSFLCIGAMA. At 211–238 the chain is on the intravirion side; that stretch reads THLCGGWSRRGRRTHPSVRYVCLPSERG.

It belongs to the alphaherpesvirinae glycoprotein G family.

The protein localises to the virion membrane. Functionally, chemokine-binding protein that inhibits neutrophils' chemotaxis. In Human herpesvirus 1 (strain 17) (HHV-1), this protein is Envelope glycoprotein G (gG).